Consider the following 673-residue polypeptide: B3 domain-containing protein Os01g0905400 (673 aa).

Basic and acidic residues predominate over residues 1–34 (MVELIKVPKIEQEEGNADSHGKEKADVVHEEKTE). The disordered stretch occupies residues 1–44 (MVELIKVPKIEQEEGNADSHGKEKADVVHEEKTEKVKRRRKRVS). Residues 79-172 (LPSFFKIMVG…VFTVQIFAIS (94 aa)) constitute a DNA-binding region (TF-B3 1). Positions 315-337 (PSFSYPESSNVMTADKESERSHQ) are disordered. The span at 328–337 (ADKESERSHQ) shows a compositional bias: basic and acidic residues. Positions 576–671 (SKKFCITIPP…ELSFQVLVPN (96 aa)) form a DNA-binding region, TF-B3 2.

It localises to the nucleus. The sequence is that of B3 domain-containing protein Os01g0905400 from Oryza sativa subsp. japonica (Rice).